Reading from the N-terminus, the 660-residue chain is MFSTATSPYDDLVIKATDENLASEDWALNMDVCDKVSSDGQNGARQAVTALQKRLSHRNPNVQIYALELANSLAQNCGKDLLGELSSRNWTSALDRLINDRATSTPVKKKALSFVKSWAKQIEETGDPNLGLMGELYDQLRAKNHVFDEPEPTPESAEEARRRQEEEELQRVLELSKQDKGGRSLFTYQPSGSAGASSSSAANNNTSPSIPQSQAQPLAQDQAQSQAAPQVTGYAPQPQKIYSPQPLEPEPPRVDLNTATCVRAIYPFTGQEVGELDFERGDVIKVLDRGFKEWWRGACNGKIGIFPVTYVEALPEPTPKELQEKAQEEARVFASLGLVDQLLQTLKGIDPARGDKLDDHPEIEEMYQASVALQGQINTLIKKYSDQKAELEHMNANFIRAMGQYEELRNGPPLVQAQPFGYVPPQPQPLLQQQNSYSYQQYPQQPQQQPQPYAQAPYAQQAQPQLQPEQYAQQTPSPAAQSQASYTAQQQPYPAQVQQDPAAASPPPNQPFYHHGGSTTSVNRIPSAQTAVQPQPHGAPSFPPSSPPTRQVTEPGVAGLGAGDQQAWDQYYQQHGQQAPHSSQHPSQPQSQPQSQPQSQPQSQQGSYYPAHAQAQGYQAAYATVPDGRAYASPPLPGTQQGQGVEGVTAGMDRMSVHAP.

The VHS domain occupies 16 to 148 (ATDENLASED…QLRAKNHVFD (133 aa)). Positions 146-254 (VFDEPEPTPE…QPLEPEPPRV (109 aa)) are disordered. Positions 158 to 182 (EEARRRQEEEELQRVLELSKQDKGG) are enriched in basic and acidic residues. Residues 164 to 183 (QEEEELQRVLELSKQDKGGR) form the UIM domain. A compositionally biased stretch (low complexity) spans 190 to 230 (PSGSAGASSSSAANNNTSPSIPQSQAQPLAQDQAQSQAAPQ). Residues 257 to 316 (NTATCVRAIYPFTGQEVGELDFERGDVIKVLDRGFKEWWRGACNGKIGIFPVTYVEALPE) enclose the SH3 domain. A compositionally biased stretch (low complexity) spans 437–503 (YSYQQYPQQP…PAQVQQDPAA (67 aa)). The disordered stretch occupies residues 437–660 (YSYQQYPQQP…GMDRMSVHAP (224 aa)). Positions 517–533 (GSTTSVNRIPSAQTAVQ) are enriched in polar residues. Low complexity-rich tracts occupy residues 573–623 (QQHG…AAYA) and 638–651 (GTQQGQGVEGVTAG).

This sequence belongs to the STAM family. In terms of assembly, component of the ESCRT-0 complex composed of HSE1 and VPS27.

Its subcellular location is the endosome membrane. Functionally, component of the ESCRT-0 complex which is the sorting receptor for ubiquitinated cargo proteins at the multivesicular body (MVB). This is Class E vacuolar protein-sorting machinery protein HSE1 (HSE1) from Cryptococcus neoformans var. neoformans serotype D (strain B-3501A) (Filobasidiella neoformans).